Reading from the N-terminus, the 154-residue chain is MAPVPHRSRHKKGRSGSVRPAHPTVPTWIQYTPEEVEQLAVELARRGFQPSQIGIVLRDQYGIPLVKSITGKKLVKVLEEHGIKYEIPEDLLNLIRRALRIRKHLEEHPKDMSSRRGLQLVESKIHRLIKYYKRVGRLPRDFVYNPQALSHLAT.

Basic residues predominate over residues 1–14; it reads MAPVPHRSRHKKGR. The interval 1–24 is disordered; sequence MAPVPHRSRHKKGRSGSVRPAHPT.

This sequence belongs to the universal ribosomal protein uS15 family. Part of the 30S ribosomal subunit.

The sequence is that of Small ribosomal subunit protein uS15 from Pyrobaculum arsenaticum (strain DSM 13514 / JCM 11321 / PZ6).